A 62-amino-acid chain; its full sequence is Small ribosomal subunit protein bS21 (62 aa).

The segment at 43–62 (EKRKRKAMALQKQRKRRSRY) is disordered. The span at 44–62 (KRKRKAMALQKQRKRRSRY) shows a compositional bias: basic residues.

Belongs to the bacterial ribosomal protein bS21 family.

The protein is Small ribosomal subunit protein bS21 of Trichodesmium erythraeum (strain IMS101).